Here is a 237-residue protein sequence, read N- to C-terminus: Urease accessory protein UreF (237 aa).

It belongs to the UreF family. In terms of assembly, ureD, UreF and UreG form a complex that acts as a GTP-hydrolysis-dependent molecular chaperone, activating the urease apoprotein by helping to assemble the nickel containing metallocenter of UreC. The UreE protein probably delivers the nickel.

It is found in the cytoplasm. Required for maturation of urease via the functional incorporation of the urease nickel metallocenter. The protein is Urease accessory protein UreF of Streptococcus salivarius (strain 57.I).